A 91-amino-acid chain; its full sequence is uncharacterized protein (91 aa).

Residues 7-23 (IALVGVVVVLFGALRYQ) traverse the membrane as a helical segment.

Its subcellular location is the membrane. This is an uncharacterized protein from Haemophilus influenzae (strain ATCC 51907 / DSM 11121 / KW20 / Rd).